A 243-amino-acid polypeptide reads, in one-letter code: Phosphoribosylaminoimidazole-succinocarboxamide synthase (243 aa).

This sequence belongs to the SAICAR synthetase family.

It carries out the reaction 5-amino-1-(5-phospho-D-ribosyl)imidazole-4-carboxylate + L-aspartate + ATP = (2S)-2-[5-amino-1-(5-phospho-beta-D-ribosyl)imidazole-4-carboxamido]succinate + ADP + phosphate + 2 H(+). Its pathway is purine metabolism; IMP biosynthesis via de novo pathway; 5-amino-1-(5-phospho-D-ribosyl)imidazole-4-carboxamide from 5-amino-1-(5-phospho-D-ribosyl)imidazole-4-carboxylate: step 1/2. This chain is Phosphoribosylaminoimidazole-succinocarboxamide synthase, found in Prochlorococcus marinus (strain MIT 9211).